Consider the following 247-residue polypeptide: RNA polymerase sigma factor FliA (247 aa).

Residues 22–94 (LIQRYAPLVK…MLDEVRKGDW (73 aa)) form a sigma-70 factor domain-2 region. Positions 49 to 52 (DLMQ) match the Interaction with polymerase core subunit RpoC motif. The sigma-70 factor domain-3 stretch occupies residues 102–171 (NTRMVTDAIR…GLPEDTSLSH (70 aa)). A sigma-70 factor domain-4 region spans residues 190 to 238 (AIAKLPERERLVLALYYDEELNLKEIGEVLGVSESRVSQLHSQCAARLR). Residues 212–231 (LKEIGEVLGVSESRVSQLHS) constitute a DNA-binding region (H-T-H motif).

It belongs to the sigma-70 factor family. FliA subfamily.

It is found in the cytoplasm. In terms of biological role, sigma factors are initiation factors that promote the attachment of RNA polymerase to specific initiation sites and are then released. This sigma factor controls the expression of flagella-related genes. Required for the flagellin gene (fliC) expression. The chain is RNA polymerase sigma factor FliA from Pseudomonas aeruginosa (strain ATCC 15692 / DSM 22644 / CIP 104116 / JCM 14847 / LMG 12228 / 1C / PRS 101 / PAO1).